Reading from the N-terminus, the 213-residue chain is Orotidine 5'-phosphate decarboxylase (213 aa).

Residues D9, K31, 59 to 68 (DFKVADIPAT), S115, 166 to 176 (PGVGAQGGKIE), G191, and R192 contribute to the substrate site. Catalysis depends on K61, which acts as the Proton donor.

The protein belongs to the OMP decarboxylase family. Type 1 subfamily. Homodimer.

It carries out the reaction orotidine 5'-phosphate + H(+) = UMP + CO2. It participates in pyrimidine metabolism; UMP biosynthesis via de novo pathway; UMP from orotate: step 2/2. In terms of biological role, catalyzes the decarboxylation of orotidine 5'-monophosphate (OMP) to uridine 5'-monophosphate (UMP). The chain is Orotidine 5'-phosphate decarboxylase from Methanocaldococcus jannaschii (strain ATCC 43067 / DSM 2661 / JAL-1 / JCM 10045 / NBRC 100440) (Methanococcus jannaschii).